The following is a 456-amino-acid chain: Enolase (456 aa).

Position 164 (Q164) interacts with (2R)-2-phosphoglycerate. The active-site Proton donor is E207. Residues D244, E287, and D314 each contribute to the Mg(2+) site. 4 residues coordinate (2R)-2-phosphoglycerate: K339, R368, S369, and K390. K339 serves as the catalytic Proton acceptor.

This sequence belongs to the enolase family. Component of the RNA degradosome, a multiprotein complex involved in RNA processing and mRNA degradation. Mg(2+) serves as cofactor.

The protein localises to the cytoplasm. It localises to the secreted. The protein resides in the cell surface. It catalyses the reaction (2R)-2-phosphoglycerate = phosphoenolpyruvate + H2O. Its pathway is carbohydrate degradation; glycolysis; pyruvate from D-glyceraldehyde 3-phosphate: step 4/5. In terms of biological role, catalyzes the reversible conversion of 2-phosphoglycerate (2-PG) into phosphoenolpyruvate (PEP). It is essential for the degradation of carbohydrates via glycolysis. The polypeptide is Enolase (Francisella tularensis subsp. tularensis (strain FSC 198)).